Reading from the N-terminus, the 308-residue chain is UDP-N-acetylenolpyruvoylglucosamine reductase (308 aa).

In terms of domain architecture, FAD-binding PCMH-type spans 32 to 196 (VGGPAARLYK…ISAKLQLSPG (165 aa)). Arg176 is a catalytic residue. Ser225 serves as the catalytic Proton donor. Residue Glu296 is part of the active site.

The protein belongs to the MurB family. The cofactor is FAD.

Its subcellular location is the cytoplasm. The catalysed reaction is UDP-N-acetyl-alpha-D-muramate + NADP(+) = UDP-N-acetyl-3-O-(1-carboxyvinyl)-alpha-D-glucosamine + NADPH + H(+). Its pathway is cell wall biogenesis; peptidoglycan biosynthesis. Functionally, cell wall formation. This Legionella pneumophila (strain Corby) protein is UDP-N-acetylenolpyruvoylglucosamine reductase.